Consider the following 298-residue polypeptide: Super small secreted glycoprotein (298 aa).

A signal peptide spans 1–32; that stretch reads MGVTGILQLPRDRFKRTSFFLWVIILFQRTFS. N40 is a glycosylation site (N-linked (GlcNAc...) asparagine; by host). 2 disulfide bridges follow: C108–C135 and C121–C147. N-linked (GlcNAc...) asparagine; by host glycosylation is found at N204, N228, N238, N257, and N268.

The protein belongs to the filoviruses glycoprotein family.

Its subcellular location is the secreted. The sequence is that of Super small secreted glycoprotein (GP) from Epomops franqueti (Franquet's epauletted fruit bat).